We begin with the raw amino-acid sequence, 231 residues long: Large ribosomal subunit protein uL1 (231 aa).

It belongs to the universal ribosomal protein uL1 family. As to quaternary structure, part of the 50S ribosomal subunit.

Its function is as follows. Binds directly to 23S rRNA. The L1 stalk is quite mobile in the ribosome, and is involved in E site tRNA release. Functionally, protein L1 is also a translational repressor protein, it controls the translation of the L11 operon by binding to its mRNA. This Ralstonia nicotianae (strain ATCC BAA-1114 / GMI1000) (Ralstonia solanacearum) protein is Large ribosomal subunit protein uL1.